We begin with the raw amino-acid sequence, 605 residues long: YTH domain-containing protein ECT4 (605 aa).

Disordered stretches follow at residues 249–274 (GVAS…SNSH) and 357–384 (ELNR…QTFD). Residues 256-274 (KANNNVPATRNQNSSSNSH) show a composition bias toward polar residues. Over residues 368–383 (KATEEVSSEEVKKQTF) the composition is skewed to basic and acidic residues. Residues 414 to 551 (AKFFIIKSYS…EQGLKVVKIF (138 aa)) enclose the YTH domain. RNA is bound by residues 420–422 (KSY), Asp426, 436–437 (WA), Asn469, Trp493, Trp498, and Trp506. The interval 580 to 605 (KQQQSQKQVWEGKTNDEKPGTVDSTM) is disordered.

As to expression, expressed in the shoot apex, at the sites of leaf formation, and in emerging leaves.

The protein resides in the cytoplasm. Its function is as follows. Specifically recognizes and binds N6-methyladenosine (m6A)-containing RNAs, and regulates mRNA stability. M6A is a modification present at internal sites of mRNAs and some non-coding RNAs and plays a role in mRNA stability and processing. Required for the correct timing of leaf formation and normal leaf morphology. The chain is YTH domain-containing protein ECT4 from Arabidopsis thaliana (Mouse-ear cress).